The chain runs to 175 residues: VQ motif-containing protein 25 (175 aa).

The VQ signature appears at 50–59; it reads FRELVQSLTG.

It is found in the nucleus. Its function is as follows. May function as negative regulator of plant defense. The protein is VQ motif-containing protein 25 of Arabidopsis thaliana (Mouse-ear cress).